The chain runs to 253 residues: LexA repressor (253 aa).

A disordered region spans residues 1 to 34 (MAIEKKPAGARGSRGSRTVKTLPNGKPDPASLSD). A DNA-binding region (H-T-H motif) is located at residues 56–76 (IREIGDAAGLQSTSSVAYQLK). Residues 82-106 (GFLRRDPNKPRAVDVRHLPETESRS) are compositionally biased toward basic and acidic residues. The disordered stretch occupies residues 82–127 (GFLRRDPNKPRAVDVRHLPETESRSSKAATQAKSKAPQAGAHDPEL). Low complexity predominate over residues 107 to 120 (SKAATQAKSKAPQA). Active-site for autocatalytic cleavage activity residues include S177 and K214.

It belongs to the peptidase S24 family. Homodimer.

It carries out the reaction Hydrolysis of Ala-|-Gly bond in repressor LexA.. Represses a number of genes involved in the response to DNA damage (SOS response), including recA and lexA. In the presence of single-stranded DNA, RecA interacts with LexA causing an autocatalytic cleavage which disrupts the DNA-binding part of LexA, leading to derepression of the SOS regulon and eventually DNA repair. The protein is LexA repressor of Corynebacterium glutamicum (strain R).